The primary structure comprises 207 residues: Chaperone protein TorD (207 aa).

Belongs to the TorD/DmsD family. TorD subfamily.

The protein localises to the cytoplasm. Functionally, involved in the biogenesis of TorA. Acts on TorA before the insertion of the molybdenum cofactor and, as a result, probably favors a conformation of the apoenzyme that is competent for acquiring the cofactor. The polypeptide is Chaperone protein TorD (Aggregatibacter aphrophilus (strain NJ8700) (Haemophilus aphrophilus)).